Consider the following 968-residue polypeptide: RNA polymerase-associated protein RapA (968 aa).

Positions 163-332 constitute a Helicase ATP-binding domain; the sequence is EVGQRFAPRV…FARLRLLDPD (170 aa). 176–183 lines the ATP pocket; sequence DEVGLGKT. Positions 278-281 match the DEAH box motif; that stretch reads DEAH. The Helicase C-terminal domain maps to 491 to 678; that stretch reads RVDWLIDFLK…GTKARYQELK (188 aa).

It belongs to the SNF2/RAD54 helicase family. RapA subfamily. In terms of assembly, interacts with the RNAP. Has a higher affinity for the core RNAP than for the holoenzyme. Its ATPase activity is stimulated by binding to RNAP.

Transcription regulator that activates transcription by stimulating RNA polymerase (RNAP) recycling in case of stress conditions such as supercoiled DNA or high salt concentrations. Probably acts by releasing the RNAP, when it is trapped or immobilized on tightly supercoiled DNA. Does not activate transcription on linear DNA. Probably not involved in DNA repair. This is RNA polymerase-associated protein RapA from Shewanella pealeana (strain ATCC 700345 / ANG-SQ1).